Here is a 250-residue protein sequence, read N- to C-terminus: UPF0259 membrane protein bbp_256 (250 aa).

A run of 6 helical transmembrane segments spans residues 21-41 (PIIV…DSII), 86-106 (FSLL…IQMT), 125-145 (FFKL…GFLL), 146-166 (YFIP…ILLI), 188-208 (IIVP…LIIS), and 216-236 (FLAY…LIIY).

The protein belongs to the UPF0259 family.

It is found in the cell membrane. This is UPF0259 membrane protein bbp_256 from Buchnera aphidicola subsp. Baizongia pistaciae (strain Bp).